The primary structure comprises 447 residues: Retinoic acid receptor alpha (447 aa).

A modulating region spans residues 1 to 79 (MAGKGNPVPG…PPPPPRVYKP (79 aa)). The segment covering 47 to 61 (TPSPATIETQSTSSE) has biased composition (polar residues). Positions 47–72 (TPSPATIETQSTSSEEIVPSPPSPPP) are disordered. 2 NR C4-type zinc fingers span residues 80–100 (CFVC…CEGC) and 116–140 (CHRE…LQKC). Residues 80 to 145 (CFVCQDKSSG…RLQKCLEVGM (66 aa)) constitute a DNA-binding region (nuclear receptor). The interval 146 to 174 (SKESVRNDRNKKKKDEKKPECIENYVLSP) is hinge. Positions 175–409 (DTEQMINRVR…PLIQEMLENS (235 aa)) constitute an NR LBD domain. Residues 400–408 (PLIQEMLEN) carry the 9aaTAD motif. The interval 407 to 447 (ENSEGLESGATGSRPSGAPPGSCSPSLSPSSAQSSPPTQSP) is disordered. Residues 414–447 (SGATGSRPSGAPPGSCSPSLSPSSAQSSPPTQSP) show a composition bias toward low complexity.

Belongs to the nuclear hormone receptor family. NR1 subfamily. Heterodimer; with an rxr molecule. Binds DNA preferentially as a rar/rxr heterodimer.

It is found in the nucleus. Receptor for retinoic acid. Retinoic acid receptors bind as heterodimers to their target response elements in response to their ligands, all-trans or 9-cis retinoic acid, and regulate gene expression in various biological processes. The rar/rxr heterodimers bind to the retinoic acid response elements (RARE) composed of tandem 5'-AGGTCA-3' sites known as DR1-DR5. The protein is Retinoic acid receptor alpha (rara) of Takifugu rubripes (Japanese pufferfish).